The primary structure comprises 582 residues: Adenine deaminase (582 aa).

Belongs to the metallo-dependent hydrolases superfamily. Adenine deaminase family. The cofactor is Mn(2+).

It carries out the reaction adenine + H2O + H(+) = hypoxanthine + NH4(+). In Oceanobacillus iheyensis (strain DSM 14371 / CIP 107618 / JCM 11309 / KCTC 3954 / HTE831), this protein is Adenine deaminase.